Reading from the N-terminus, the 820-residue chain is Ribosome biogenesis protein ERB1 (820 aa).

Positions 1-111 (MVRSRSNSVK…SDAGDDEVDP (111 aa)) are disordered. Basic and acidic residues predominate over residues 9 to 19 (VKKDLKRKVDE). Residues 20–48 (PVDVQDEFDVEGLIDEGDSDDEDEAEQEV) are compositionally biased toward acidic residues. Over residues 53–64 (VTKDKKNTSKTE) the composition is skewed to basic and acidic residues. Positions 65–110 (NEEDADDESDSDAELEALIGEEEDLSGSELEDELAYFSDAGDDEVD) are enriched in acidic residues. The interval 282–395 (RFIPSKHEAK…LRHVPGYSES (114 aa)) is required for interaction with NOP7. Residues 395–431 (SVRERFERSLDLYLAPRVRKNKLNIDPDSLIPDLPSP) form a required for interaction with YTM1 region. WD repeat units lie at residues 447-486 (GHKGKVRAISVDPSGEFLATGGDDGTLRVWEVLTGRELYR) and 495-535 (AQDD…FDIE). The disordered stretch occupies residues 545–585 (GWGFAEGGREQQDIDTKGLDDDADSDSDDETGHVKKKSPPA). A compositionally biased stretch (basic and acidic residues) spans 551–564 (GGREQQDIDTKGLD). WD repeat units follow at residues 604 to 646 (TATK…SQSP), 649 to 687 (KSKGIVQDAMFHPFRPHLYVATQRYVRIYDLAKQVMAKK), 690 to 729 (PGARWVSSLDIHPRGDNVILSSFDKRLLWHDLDLSDKPYK), 733 to 773 (YHEK…DMMT), and 789 to 820 (KSGLGILRVEWHPREAWLFSAAADGTAKLWTT).

This sequence belongs to the WD repeat BOP1/ERB1 family. In terms of assembly, component of the NOP7 complex, composed of ERB1, NOP7 and YTM1. The complex is held together by ERB1, which interacts with NOP7 via its N-terminal domain and with YTM1 via a high-affinity interaction between the seven-bladed beta-propeller domains of the 2 proteins. The NOP7 complex associates with the 66S pre-ribosome.

The protein resides in the nucleus. The protein localises to the nucleolus. It is found in the nucleoplasm. Component of the NOP7 complex, which is required for maturation of the 25S and 5.8S ribosomal RNAs and formation of the 60S ribosome. The chain is Ribosome biogenesis protein ERB1 from Yarrowia lipolytica (strain CLIB 122 / E 150) (Yeast).